Here is a 388-residue protein sequence, read N- to C-terminus: 2-Hydroxyacid oxidase (388 aa).

The segment at 1–21 (MENQFKNNNNSSSIETSNQFS) is disordered. The FMN hydroxy acid dehydrogenase domain maps to 26-384 (NRLDSFVSVS…NNSIIWDQNK (359 aa)). Glyoxylate is bound at residue Y52. FMN-binding positions include 105–107 (PWA), S134, 156–158 (QLY), and T184. Residue Y158 participates in glyoxylate binding. R193 lines the glyoxylate pocket. The FMN site is built by K255 and S277. H279 and R282 together coordinate glyoxylate. Residue H279 is the Proton acceptor of the active site. Residues 310 to 314 (DGGIR) and 333 to 334 (GR) contribute to the FMN site.

It belongs to the FMN-dependent alpha-hydroxy acid dehydrogenase family. Homotetramer. FMN serves as cofactor.

It catalyses the reaction glycolate + O2 = glyoxylate + H2O2. It carries out the reaction a (2S)-2-hydroxycarboxylate + O2 = a 2-oxocarboxylate + H2O2. Its function is as follows. Catalyzes the oxidation of glycolate to glyoxylate, with a reduction of O2 to H2O2. May use other 2-hydroxyacids as substrates. This is 2-Hydroxyacid oxidase (haox) from Dictyostelium discoideum (Social amoeba).